A 473-amino-acid chain; its full sequence is 3-isopropylmalate dehydratase large subunit (473 aa).

Residues cysteine 351, cysteine 414, and cysteine 417 each contribute to the [4Fe-4S] cluster site.

Belongs to the aconitase/IPM isomerase family. LeuC type 1 subfamily. Heterodimer of LeuC and LeuD. The cofactor is [4Fe-4S] cluster.

The enzyme catalyses (2R,3S)-3-isopropylmalate = (2S)-2-isopropylmalate. The protein operates within amino-acid biosynthesis; L-leucine biosynthesis; L-leucine from 3-methyl-2-oxobutanoate: step 2/4. Functionally, catalyzes the isomerization between 2-isopropylmalate and 3-isopropylmalate, via the formation of 2-isopropylmaleate. The sequence is that of 3-isopropylmalate dehydratase large subunit from Variovorax paradoxus (strain S110).